Consider the following 313-residue polypeptide: Ubiquinone biosynthesis protein COQ4, mitochondrial (313 aa).

4 residues coordinate Zn(2+): H197, D198, H201, and E213. Residues 290-313 (QPPDLRELRRKQKKLPEPERENAN) are disordered. Over residues 303–313 (KLPEPERENAN) the composition is skewed to basic and acidic residues.

It belongs to the COQ4 family. Component of a multi-subunit COQ enzyme complex, composed of at least COQ3, COQ4, COQ5, COQ6, COQ7 and COQ9. Zn(2+) serves as cofactor.

It localises to the mitochondrion inner membrane. The catalysed reaction is a 4-hydroxy-3-methoxy-5-(all-trans-polyprenyl)benzoate + H(+) = a 2-methoxy-6-(all-trans-polyprenyl)phenol + CO2. It functions in the pathway cofactor biosynthesis; ubiquinone biosynthesis. Its function is as follows. Lyase that catalyzes the C1-decarboxylation of 4-hydroxy-3-methoxy-5-(all-trans-polyprenyl)benzoic acid into 2-methoxy-6-(all-trans-polyprenyl)phenol during ubiquinone biosynthesis. In Meyerozyma guilliermondii (strain ATCC 6260 / CBS 566 / DSM 6381 / JCM 1539 / NBRC 10279 / NRRL Y-324) (Yeast), this protein is Ubiquinone biosynthesis protein COQ4, mitochondrial.